Here is a 165-residue protein sequence, read N- to C-terminus: MAPITLSTIDGKLKDIIQHLFEIQSAVHGYLGPETQQELVRKIKNLTTALQTLSLHTRDDPTASTTAPNQYQSTNPNDPALHSIALPPEIIDYVDAARNPDIYTREFVELVQRGNQDLKGKKEAFADFRDVLAREMRSAMPELRGEVDKVIQATGGKKQSERERG.

Disordered stretches follow at residues 54–81 (SLHT…DPAL) and 143–165 (LRGE…RERG). Positions 62 to 77 (TASTTAPNQYQSTNPN) are enriched in polar residues.

This sequence belongs to the Mediator complex subunit 10 family. Component of the Mediator complex.

It is found in the nucleus. In terms of biological role, component of the Mediator complex, a coactivator involved in the regulated transcription of nearly all RNA polymerase II-dependent genes. Mediator functions as a bridge to convey information from gene-specific regulatory proteins to the basal RNA polymerase II transcription machinery. Mediator is recruited to promoters by direct interactions with regulatory proteins and serves as a scaffold for the assembly of a functional preinitiation complex with RNA polymerase II and the general transcription factors. This is Mediator of RNA polymerase II transcription subunit 10 (nut2) from Emericella nidulans (strain FGSC A4 / ATCC 38163 / CBS 112.46 / NRRL 194 / M139) (Aspergillus nidulans).